A 427-amino-acid polypeptide reads, in one-letter code: Trigger factor (427 aa).

A PPIase FKBP-type domain is found at 163-248 (GDTVVIDFVG…IHEVKAKEVP (86 aa)).

This sequence belongs to the FKBP-type PPIase family. Tig subfamily.

It localises to the cytoplasm. The catalysed reaction is [protein]-peptidylproline (omega=180) = [protein]-peptidylproline (omega=0). Its function is as follows. Involved in protein export. Acts as a chaperone by maintaining the newly synthesized protein in an open conformation. Functions as a peptidyl-prolyl cis-trans isomerase. The protein is Trigger factor of Streptococcus pneumoniae (strain Taiwan19F-14).